A 231-amino-acid chain; its full sequence is Adenylate kinase (231 aa).

ATP is bound at residue 12–17 (GAGKGT). The tract at residues 32-61 (STGDMLRAAVKAKTPLGLEVKKIMESGGLV) is NMP. Residues Thr-33, Arg-38, 59–61 (GLV), 87–90 (GFPR), and Gln-94 each bind AMP. An LID region spans residues 124–161 (GRLIHPASGRTYHRRYNPPKVADKDDVTGEPLIQRADD). Residues Arg-125 and 134–135 (TY) each bind ATP. The AMP site is built by Arg-158 and Arg-169. ATP is bound at residue Gly-205.

Belongs to the adenylate kinase family. Monomer.

It localises to the cytoplasm. The catalysed reaction is AMP + ATP = 2 ADP. Its pathway is purine metabolism; AMP biosynthesis via salvage pathway; AMP from ADP: step 1/1. In terms of biological role, catalyzes the reversible transfer of the terminal phosphate group between ATP and AMP. Plays an important role in cellular energy homeostasis and in adenine nucleotide metabolism. The chain is Adenylate kinase from Coxiella burnetii (strain CbuK_Q154) (Coxiella burnetii (strain Q154)).